The primary structure comprises 746 residues: NAD(P)H-quinone oxidoreductase subunit 5, chloroplastic (746 aa).

15 helical membrane-spanning segments follow: residues 9–29 (WIIPFAPLPFTMSIGLGLLLV), 40–60 (WTFPSVSLLSIAMVFSVNLSI), 89–109 (IDPLTSIMSILITTVGIMVLI), 122–139 (LRFFAYMSFSNTSMLGLV), 147–167 (IYIFWELVGMCSYLLIGFWFT), 185–205 (GDFGLLLGILGFYWITGSFEF), 219–239 (NGVNSLFATLCAFLLFVGAVA), 258–278 (TPISALIHAATMVAAGIFLVA), 280–300 (LLPLFTVIPYIMNLISLIGVI), 327–347 (LGYIMLAPGIGSYRAALFHLI), 396–416 (TTFLLGTLSLCGIPPLACFWS), 425–445 (WLYSPIFAIIACSTAGLTAFY), 546–566 (LLPLLGLVLFTLFVGSVGIPF), 605–625 (IYSVSIACFGIFIASLFYGSI), and 722–742 (YLFVYLSYVSILLLIYYFYFF).

The protein belongs to the complex I subunit 5 family. In terms of assembly, NDH is composed of at least 16 different subunits, 5 of which are encoded in the nucleus.

The protein localises to the plastid. It is found in the chloroplast thylakoid membrane. It carries out the reaction a plastoquinone + NADH + (n+1) H(+)(in) = a plastoquinol + NAD(+) + n H(+)(out). It catalyses the reaction a plastoquinone + NADPH + (n+1) H(+)(in) = a plastoquinol + NADP(+) + n H(+)(out). NDH shuttles electrons from NAD(P)H:plastoquinone, via FMN and iron-sulfur (Fe-S) centers, to quinones in the photosynthetic chain and possibly in a chloroplast respiratory chain. The immediate electron acceptor for the enzyme in this species is believed to be plastoquinone. Couples the redox reaction to proton translocation, and thus conserves the redox energy in a proton gradient. This Calycanthus floridus var. glaucus (Eastern sweetshrub) protein is NAD(P)H-quinone oxidoreductase subunit 5, chloroplastic (ndhF).